We begin with the raw amino-acid sequence, 585 residues long: T-cell surface protein tactile (585 aa).

A signal peptide spans 1 to 21; the sequence is MEKKWKYCAVYYIIQIHFVKG. The Extracellular segment spans residues 22–519; sequence VWEKTVNTEE…IVVNKPKDGM (498 aa). Residues 38–125 enclose the Ig-like V-type 1 domain; the sequence is GSDVNLTCQT…YECMLVLYPE (88 aa). Asn-42, Asn-97, Asn-107, Asn-148, Asn-156, Asn-166, Asn-200, Asn-215, Asn-277, Asn-278, Asn-300, Asn-350, and Asn-368 each carry an N-linked (GlcNAc...) asparagine glycan. Residues Cys-45 and Cys-118 are joined by a disulfide bond. In terms of domain architecture, Ig-like V-type 2 spans 156–238; that stretch reads NQTLEIPCFQ…YRLHLSPVQI (83 aa). A disulfide bridge links Cys-163 with Cys-247. The 107-residue stretch at 269–375 folds into the Ig-like C2-type domain; it reads PEIPVIVENN…VWNISSEKIT (107 aa). A disulfide bridge links Cys-290 with Cys-355. Composition is skewed to polar residues over residues 385 to 418, 426 to 452, and 460 to 475; these read TDPP…SSVT, RPNT…SSGT, and RIPS…GAGS. The segment at 385–475 is disordered; that stretch reads TDPPLSVTES…YSSSPSGAGS (91 aa). N-linked (GlcNAc...) asparagine glycosylation occurs at Asn-435. Asn-497 carries N-linked (GlcNAc...) asparagine glycosylation. The chain crosses the membrane as a helical span at residues 520-540; sequence SWPVIVAALLFCCMILFGLGV. Residues 541 to 585 lie on the Cytoplasmic side of the membrane; that stretch reads RKWCQYQKEIMERPPPFKPPPPPIKYTCIQEPNESDLPYHEMETL.

Homodimer; disulfide-linked. Interacts with PVR. Expressed on normal T-cell lines and clones, and some transformed T-cells, but no other cultured cell lines tested. It is expressed at very low levels on activated B-cells.

It localises to the membrane. Its function is as follows. May be involved in adhesive interactions of activated T and NK cells during the late phase of the immune response. Promotes NK cell-target adhesion by interacting with PVR present on target cells. May function at a time after T and NK cells have penetrated the endothelium using integrins and selectins, when they are actively engaging diseased cells and moving within areas of inflammation. The sequence is that of T-cell surface protein tactile (CD96) from Homo sapiens (Human).